Consider the following 238-residue polypeptide: Probable transcriptional regulatory protein YeeN (238 aa).

The protein belongs to the TACO1 family. YeeN subfamily.

The protein resides in the cytoplasm. This is Probable transcriptional regulatory protein YeeN from Salmonella typhimurium (strain LT2 / SGSC1412 / ATCC 700720).